The chain runs to 59 residues: Photosystem II reaction center protein K (59 aa).

Positions 1–22 (MLNIFSLICLNSALYPSSLFFA) are excised as a propeptide. Residues 38–58 (MPVIPLFFFLLAFVWQAAVSF) form a helical membrane-spanning segment.

This sequence belongs to the PsbK family. PSII is composed of 1 copy each of membrane proteins PsbA, PsbB, PsbC, PsbD, PsbE, PsbF, PsbH, PsbI, PsbJ, PsbK, PsbL, PsbM, PsbT, PsbX, PsbY, PsbZ, Psb30/Ycf12, at least 3 peripheral proteins of the oxygen-evolving complex and a large number of cofactors. It forms dimeric complexes.

It is found in the plastid. The protein resides in the chloroplast thylakoid membrane. In terms of biological role, one of the components of the core complex of photosystem II (PSII). PSII is a light-driven water:plastoquinone oxidoreductase that uses light energy to abstract electrons from H(2)O, generating O(2) and a proton gradient subsequently used for ATP formation. It consists of a core antenna complex that captures photons, and an electron transfer chain that converts photonic excitation into a charge separation. The chain is Photosystem II reaction center protein K from Lactuca sativa (Garden lettuce).